A 287-amino-acid polypeptide reads, in one-letter code: Probable aquaporin PIP1-4 (287 aa).

Methionine 1 carries the N-acetylmethionine modification. Residues 1–36 (MEGKEEDVRVGANKFPERQPIGTSAQSTDKDYKEPP) are disordered. Topologically, residues 1–55 (MEGKEEDVRVGANKFPERQPIGTSAQSTDKDYKEPPPAPLFEPGELSSWSFYRAG) are cytoplasmic. The chain crosses the membrane as a helical span at residues 56–76 (IAEFIATFLFLYITVLTVMGV). Residues 77–92 (KRAPNMCASVGIQGIA) lie on the Extracellular side of the membrane. A helical membrane pass occupies residues 93–113 (WAFGGMIFALVYCTAGISGGH). Residues 114 to 133 (INPAVTFGLFLARKLSLTRA) are Cytoplasmic-facing. The short motif at 115–117 (NPA) is the NPA 1 element. The chain crosses the membrane as a helical span at residues 134–154 (VFYMIMQCLGAICGAGVVKGF). Residues 155 to 175 (QPTPYQTLGGGANTVAHGYTK) are Extracellular-facing. The chain crosses the membrane as a helical span at residues 176 to 196 (GSGLGAEIIGTFVLVYTVFSA). Residues 197–209 (TDAKRSARDSHVP) are Cytoplasmic-facing. Residues 210–230 (ILAPLPIGFAVFLVHLATIPI) form a helical membrane-spanning segment. The Extracellular portion of the chain corresponds to 231–257 (TGTGINPARSLGAAIIYNKDHSWDDHW). The NPA 2 signature appears at 236–238 (NPA). A helical membrane pass occupies residues 258–278 (IFWVGPFIGAALAALYHQIVI). The Cytoplasmic portion of the chain corresponds to 279–287 (RAIPFKSKS). Serine 285 carries the phosphoserine modification.

This sequence belongs to the MIP/aquaporin (TC 1.A.8) family. PIP (TC 1.A.8.11) subfamily. In terms of tissue distribution, predominantly expressed in roots and green siliques. Also expressed above ground and in flower buds.

It localises to the cell membrane. Aquaporins facilitate the transport of water and small neutral solutes across cell membranes. The chain is Probable aquaporin PIP1-4 (PIP1.4) from Arabidopsis thaliana (Mouse-ear cress).